Reading from the N-terminus, the 102-residue chain is Integration host factor subunit alpha (102 aa).

Positions Phe49–Glu70 are disordered.

This sequence belongs to the bacterial histone-like protein family. As to quaternary structure, heterodimer of an alpha and a beta chain.

In terms of biological role, this protein is one of the two subunits of integration host factor, a specific DNA-binding protein that functions in genetic recombination as well as in transcriptional and translational control. In Nitrosomonas europaea (strain ATCC 19718 / CIP 103999 / KCTC 2705 / NBRC 14298), this protein is Integration host factor subunit alpha.